Here is a 228-residue protein sequence, read N- to C-terminus: Growth arrest-specific protein 1 homolog (228 aa).

The first 17 residues, 1 to 17 (MRRVILPLVMTVTLCLA), serve as a signal peptide directing secretion. N-linked (GlcNAc...) asparagine glycosylation is found at Asn143 and Asn156. A lipid anchor (GPI-anchor amidated aspartate) is attached at Asp205. A propeptide spans 206 to 228 (SSVGHGFNILSAISVYLLTVLVF) (removed in mature form).

In terms of tissue distribution, pharynx muscle cells from its early formation, in the two-fold embryo, until the adult stage.

It localises to the cell membrane. Its function is as follows. Role in pharynx function or development. The chain is Growth arrest-specific protein 1 homolog (phg-1) from Caenorhabditis elegans.